The primary structure comprises 513 residues: Cyclin-dependent kinase C-2 (513 aa).

The Protein kinase domain occupies 26–325; the sequence is FEKLEQIGEG…AKDALDAEYF (300 aa). Residues 32-40 and Lys55 contribute to the ATP site; that span reads IGEGTYGQV. At Tyr37 the chain carries Phosphotyrosine. Asp164 serves as the catalytic Proton acceptor. Thr198 carries the post-translational modification Phosphothreonine. The interval 337–513 is disordered; the sequence is LPTYESSHEF…ARNQQYGWQP (177 aa). Low complexity predominate over residues 395–404; the sequence is AGPNHPMNNN. Positions 434–448 are enriched in polar residues; sequence SGNQTGGYNNQSRGG. 2 stretches are compositionally biased toward gly residues: residues 461 to 476 and 483 to 496; these read APYGAGPRGPSGGYGV and QGGGQYGGSGGSGR.

This sequence belongs to the protein kinase superfamily. CMGC Ser/Thr protein kinase family. CDC2/CDKX subfamily. In terms of assembly, interacts with CYCT1-3. In terms of tissue distribution, highly expressed in flowers. Expressed in seedlings, roots, rosettes and stems.

It catalyses the reaction L-seryl-[protein] + ATP = O-phospho-L-seryl-[protein] + ADP + H(+). The catalysed reaction is L-threonyl-[protein] + ATP = O-phospho-L-threonyl-[protein] + ADP + H(+). The enzyme catalyses [DNA-directed RNA polymerase] + ATP = phospho-[DNA-directed RNA polymerase] + ADP + H(+). This is Cyclin-dependent kinase C-2 (CDKC-2) from Arabidopsis thaliana (Mouse-ear cress).